Reading from the N-terminus, the 105-residue chain is U-scoloptoxin(05)-Sa2a (105 aa).

Residues 1-24 (MKEAVKMSCLCIFLFLFLFSLTDA) form the signal peptide. The interval 79–105 (HVPESNQKDGKVSTHMSSCNTDGCNAN) is disordered. Residues 92 to 105 (THMSSCNTDGCNAN) show a composition bias toward polar residues.

Belongs to the scoloptoxin-05 family. Post-translationally, contains 4 disulfide bonds. As to expression, expressed by the venom gland.

It localises to the secreted. The sequence is that of U-scoloptoxin(05)-Sa2a from Scolopendra alternans (Florida Keys giant centipede).